The primary structure comprises 435 residues: Tubulin-like protein TubZ (435 aa).

GTP is bound by residues 25–26 (MG), 124–126 (GTG), asparagine 185, and asparagine 209. Residues 403–435 (QEEKPKKKKLNFGAEPEAEVADDSQPTKKKLSF) are disordered.

Belongs to the FtsZ family. TubZ subfamily. As to quaternary structure, polymerizes to form two-stranded filaments and bundles at higher concentration in the presence of GTP. Binds to the TubR-tubC protein DNA complex.

It is found in the cytoplasm. The enzyme catalyses GTP + H2O = GDP + phosphate + H(+). With respect to regulation, GTPase inhibited by GTP-gamma-S, which also stabilizes filaments. Its function is as follows. A tubulin-like, filament forming GTPase; the motor component of the type III plasmid partition system which ensures correct segregation of the pXO1 plasmid. Essential for plasmid replication. The filaments seed from a DNA centromere-like site (tubC)-TubR complex which extends to surround the TubZ filaments. Highly dynamic filaments grow at the plus end and depolymerize at the minus end, a process called treadmilling. TubR-tubC complexes track the depolymerizing minus end of the filament, probably pulling plasmid within the cell. Has a high GTPase activity; in the presence of GTP assembles into dynamic filaments which bind almost exclusively GDP. Filament formation is cooperative, requiring a critical concentration. Formation occurs very quickly and is followed by disassembly as GTP is consumed. Small amounts of GTP-gamma-S stabilize filaments. Has high GTP and dGTPase activity, 6-fold lower ATPase activity. Forms filaments in the presence of ATP that also disassemble. Weakly binds DNA in a GTP-dependent, non-sequence-specific manner; GTP hydrolysis is not required for DNA-binding. The polypeptide is Tubulin-like protein TubZ (Bacillus anthracis).